A 157-amino-acid polypeptide reads, in one-letter code: Small ribosomal subunit protein uS7 (157 aa).

It belongs to the universal ribosomal protein uS7 family. Part of the 30S ribosomal subunit. Contacts proteins S9 and S11.

In terms of biological role, one of the primary rRNA binding proteins, it binds directly to 16S rRNA where it nucleates assembly of the head domain of the 30S subunit. Is located at the subunit interface close to the decoding center, probably blocks exit of the E-site tRNA. The polypeptide is Small ribosomal subunit protein uS7 (Paracidovorax citrulli (strain AAC00-1) (Acidovorax citrulli)).